We begin with the raw amino-acid sequence, 122 residues long: MIQQESRLKVADNSGARELLTIKVLGGSGRKYANIGDIIVATVKQATPGGVVKKGDVVKAVVVRTKSGARRPDGSYIRFDENAAVIIKDDKSPRGTRIFGPVARELRDSNFMKIVSLAPEVL.

The protein belongs to the universal ribosomal protein uL14 family. In terms of assembly, part of the 50S ribosomal subunit. Forms a cluster with proteins L3 and L19. In the 70S ribosome, L14 and L19 interact and together make contacts with the 16S rRNA in bridges B5 and B8.

Functionally, binds to 23S rRNA. Forms part of two intersubunit bridges in the 70S ribosome. This is Large ribosomal subunit protein uL14 from Bacillus cytotoxicus (strain DSM 22905 / CIP 110041 / 391-98 / NVH 391-98).